Consider the following 884-residue polypeptide: Alanine--tRNA ligase (884 aa).

4 residues coordinate Zn(2+): H562, H566, C674, and H678.

This sequence belongs to the class-II aminoacyl-tRNA synthetase family. Zn(2+) is required as a cofactor.

The protein localises to the cytoplasm. The enzyme catalyses tRNA(Ala) + L-alanine + ATP = L-alanyl-tRNA(Ala) + AMP + diphosphate. Catalyzes the attachment of alanine to tRNA(Ala) in a two-step reaction: alanine is first activated by ATP to form Ala-AMP and then transferred to the acceptor end of tRNA(Ala). Also edits incorrectly charged Ser-tRNA(Ala) and Gly-tRNA(Ala) via its editing domain. The protein is Alanine--tRNA ligase of Rhizobium etli (strain ATCC 51251 / DSM 11541 / JCM 21823 / NBRC 15573 / CFN 42).